The chain runs to 651 residues: Polyadenylate-binding protein 1 (651 aa).

The span at 1–27 shows a compositional bias: low complexity; the sequence is MSSTESPVPAAAAPAEAVPASTPAPAA. Residues 1–42 form a disordered region; the sequence is MSSTESPVPAAAAPAEAVPASTPAPAAEQPAVGNGEQRNNAD. RRM domains are found at residues 47–125, 135–211, 227–304, and 330–407; these read TSLY…WSQR, GNIF…HHIP, TNVY…RAQK, and VNLY…LAQR. 2 disordered regions span residues 481-554 and 632-651; these read QPGQ…EADQ and QNDSAGAEAEANAEAPKTEA. The segment covering 529–540 has biased composition (pro residues); the sequence is AGQPVPGQPMPR. Positions 555-632 constitute a PABC domain; that stretch reads PGALTAAALA…ALEVLKEYQQ (78 aa). Low complexity predominate over residues 636 to 651; it reads AGAEAEANAEAPKTEA.

The protein belongs to the polyadenylate-binding protein type-1 family. Part of large ribonucleoprotein complexes (mRNPs) containing RNA-binding proteins RRM4 and PAB1, endosome-binding protein UPA1, core scaffold protein UPA2 and associated factor GRP1. Interacts (via PABC domain) with UPA1 (via PAM2 domain). Interacts (via PABC domain) with UPA2 (via PAM2 domains).

The protein localises to the cytoplasm. The protein resides in the cytoskeleton. Its subcellular location is the endosome. RNA-binding protein involved in the formation of polar-growing hyphae which is essential for infection by the plant pathogen. Component of endosomal mRNA transport that regulates polarity of the infectious hyphae by transporting a broad spectrum of cargo mRNAs from the nucleus to cell poles. The polypeptide is Polyadenylate-binding protein 1 (Mycosarcoma maydis (Corn smut fungus)).